Here is a 44-residue protein sequence, read N- to C-terminus: Photosystem II reaction center protein K (44 aa).

Positions 1–7 (MESLLLA) are excised as a propeptide. A helical membrane pass occupies residues 23–43 (LPIIPVFFLLLAFVWQAAIGF).

This sequence belongs to the PsbK family. PSII is composed of 1 copy each of membrane proteins PsbA, PsbB, PsbC, PsbD, PsbE, PsbF, PsbH, PsbI, PsbJ, PsbK, PsbL, PsbM, PsbT, PsbX, PsbY, PsbZ, Psb30/Ycf12, at least 3 peripheral proteins of the oxygen-evolving complex and a large number of cofactors. It forms dimeric complexes.

It localises to the plastid. The protein resides in the chloroplast thylakoid membrane. Its function is as follows. One of the components of the core complex of photosystem II (PSII). PSII is a light-driven water:plastoquinone oxidoreductase that uses light energy to abstract electrons from H(2)O, generating O(2) and a proton gradient subsequently used for ATP formation. It consists of a core antenna complex that captures photons, and an electron transfer chain that converts photonic excitation into a charge separation. In Trieres chinensis (Marine centric diatom), this protein is Photosystem II reaction center protein K.